The following is a 355-amino-acid chain: Guanine nucleotide-binding protein G(i) subunit alpha-2 (355 aa).

The N-myristoyl glycine moiety is linked to residue glycine 2. A lipid anchor (S-palmitoyl cysteine) is attached at cysteine 3. The region spanning 32-355 is the G-alpha domain; that stretch reads REVKLLLLGA…KNNLKDCGLF (324 aa). The G1 motif stretch occupies residues 35-48; that stretch reads KLLLLGAGESGKST. Residues 40 to 47, 176 to 182, 201 to 205, 270 to 273, and alanine 327 each bind GTP; these read GAGESGKS, LRTRVKT, DVGGQ, and NKKD. Positions 47 and 182 each coordinate Mg(2+). Positions 174-182 are G2 motif; sequence DVLRTRVKT. The G3 motif stretch occupies residues 197-206; sequence FKMFDVGGQR. Positions 266 to 273 are G4 motif; sequence ILFLNKKD. A G5 motif region spans residues 325-330; sequence TCATDT.

This sequence belongs to the G-alpha family. G(i/o/t/z) subfamily. As to quaternary structure, g proteins are composed of 3 units; alpha, beta and gamma. The alpha chain contains the guanine nucleotide binding site. In this context, interacts with GNB2. Interacts with UNC5B. Interacts with GPSM1. Interacts with RGS12 and RGS14. Interacts (inactive GDP-bound form) with NUCB1 (via GBA motif); the interaction leads to activation of GNAI3. Interacts (inactive GDP-bound form) with CCDC88C/DAPLE (via GBA motif). Interacts (inactive GDP-bound form) with CCDC8A/GIV (via GBA motif). Interacts with CXCR1 and CXCR2.

The protein resides in the cytoplasm. It is found in the cytoskeleton. The protein localises to the microtubule organizing center. It localises to the centrosome. Its subcellular location is the cell membrane. The protein resides in the membrane. Guanine nucleotide-binding proteins (G proteins) are involved as modulators or transducers in various transmembrane signaling systems. The G(i) proteins are involved in hormonal regulation of adenylate cyclase: they inhibit the cyclase in response to beta-adrenergic stimuli. May play a role in cell division. The sequence is that of Guanine nucleotide-binding protein G(i) subunit alpha-2 (Gnai2) from Mus musculus (Mouse).